Here is a 123-residue protein sequence, read N- to C-terminus: Ribosome-binding factor A (123 aa).

This sequence belongs to the RbfA family. Monomer. Binds 30S ribosomal subunits, but not 50S ribosomal subunits or 70S ribosomes.

The protein resides in the cytoplasm. Its function is as follows. One of several proteins that assist in the late maturation steps of the functional core of the 30S ribosomal subunit. Associates with free 30S ribosomal subunits (but not with 30S subunits that are part of 70S ribosomes or polysomes). Required for efficient processing of 16S rRNA. May interact with the 5'-terminal helix region of 16S rRNA. The protein is Ribosome-binding factor A of Rickettsia bellii (strain OSU 85-389).